A 297-amino-acid polypeptide reads, in one-letter code: Homoserine kinase (297 aa).

82–92 (PVSRGLGSSAA) is a binding site for ATP.

Belongs to the GHMP kinase family. Homoserine kinase subfamily.

Its subcellular location is the cytoplasm. The catalysed reaction is L-homoserine + ATP = O-phospho-L-homoserine + ADP + H(+). It participates in amino-acid biosynthesis; L-threonine biosynthesis; L-threonine from L-aspartate: step 4/5. Its function is as follows. Catalyzes the ATP-dependent phosphorylation of L-homoserine to L-homoserine phosphate. In Clostridium botulinum (strain Okra / Type B1), this protein is Homoserine kinase.